Consider the following 119-residue polypeptide: DLFQFGGMIGCANKGARSWLSYVNYGCYCGWGGSGTPVDELDRCCQIHDNCYGEAEKKQCGPKMTSYSWKCANDVPVCNDSKSACKGFVCDCDAAAAKCFAKAPYNKNNIGIGSKTRCQ.

Intrachain disulfides connect Cys11/Cys71, Cys27/Cys118, Cys29/Cys45, Cys44/Cys99, Cys51/Cys92, Cys60/Cys85, and Cys78/Cys90. 3 residues coordinate Ca(2+): Tyr28, Gly30, and Gly32. His48 is an active-site residue. Residue Asp49 participates in Ca(2+) binding. Residue Asp93 is part of the active site.

Ca(2+) serves as cofactor. Expressed by the venom gland.

Its subcellular location is the secreted. The catalysed reaction is a 1,2-diacyl-sn-glycero-3-phosphocholine + H2O = a 1-acyl-sn-glycero-3-phosphocholine + a fatty acid + H(+). Snake venom phospholipase A2 (PLA2) that potently inhibits ADP-(IC(50)=10 nM) and collagen-induced (IC(50)=7 nM) platelet aggregation when tested on human whole blood. PLA2 catalyzes the calcium-dependent hydrolysis of the 2-acyl groups in 3-sn-phosphoglycerides. This Acanthophis antarcticus (Common death adder) protein is Basic phospholipase A2 acanthin-1.